The sequence spans 364 residues: Dihydroorotate dehydrogenase (quinone) (364 aa).

FMN is bound by residues 61-65 (AGFDK) and T85. K65 lines the substrate pocket. Residue 110-114 (NRMGF) participates in substrate binding. FMN is bound by residues N139 and N170. Substrate is bound at residue N170. The active-site Nucleophile is S173. Residue N175 coordinates substrate. 2 residues coordinate FMN: K214 and A242. Residue 243–244 (NT) coordinates substrate. FMN is bound by residues G266, G295, and 316-317 (YS).

The protein belongs to the dihydroorotate dehydrogenase family. Type 2 subfamily. Monomer. FMN is required as a cofactor.

It localises to the cell membrane. It carries out the reaction (S)-dihydroorotate + a quinone = orotate + a quinol. It functions in the pathway pyrimidine metabolism; UMP biosynthesis via de novo pathway; orotate from (S)-dihydroorotate (quinone route): step 1/1. Functionally, catalyzes the conversion of dihydroorotate to orotate with quinone as electron acceptor. The protein is Dihydroorotate dehydrogenase (quinone) of Rhodopseudomonas palustris (strain BisA53).